A 463-amino-acid chain; its full sequence is Siroheme synthase 1 (463 aa).

A precorrin-2 dehydrogenase /sirohydrochlorin ferrochelatase region spans residues 1–203 (MDFLPLFCQL…GQQQAAEESV (203 aa)). NAD(+) is bound by residues 22-23 (EV) and 43-44 (PH). S128 is subject to Phosphoserine. Residues 215-463 (GSVTLVGAGP…YGEANTLAGV (249 aa)) are uroporphyrinogen-III C-methyltransferase. Position 224 (P224) interacts with S-adenosyl-L-methionine. Catalysis depends on D247, which acts as the Proton acceptor. K269 serves as the catalytic Proton donor. S-adenosyl-L-methionine contacts are provided by residues 300–302 (GGD), I305, 330–331 (TA), M382, and G411.

This sequence in the N-terminal section; belongs to the precorrin-2 dehydrogenase / sirohydrochlorin ferrochelatase family. The protein in the C-terminal section; belongs to the precorrin methyltransferase family.

The catalysed reaction is uroporphyrinogen III + 2 S-adenosyl-L-methionine = precorrin-2 + 2 S-adenosyl-L-homocysteine + H(+). It catalyses the reaction precorrin-2 + NAD(+) = sirohydrochlorin + NADH + 2 H(+). The enzyme catalyses siroheme + 2 H(+) = sirohydrochlorin + Fe(2+). It functions in the pathway cofactor biosynthesis; adenosylcobalamin biosynthesis; precorrin-2 from uroporphyrinogen III: step 1/1. The protein operates within cofactor biosynthesis; adenosylcobalamin biosynthesis; sirohydrochlorin from precorrin-2: step 1/1. Its pathway is porphyrin-containing compound metabolism; siroheme biosynthesis; precorrin-2 from uroporphyrinogen III: step 1/1. It participates in porphyrin-containing compound metabolism; siroheme biosynthesis; siroheme from sirohydrochlorin: step 1/1. It functions in the pathway porphyrin-containing compound metabolism; siroheme biosynthesis; sirohydrochlorin from precorrin-2: step 1/1. Multifunctional enzyme that catalyzes the SAM-dependent methylations of uroporphyrinogen III at position C-2 and C-7 to form precorrin-2 via precorrin-1. Then it catalyzes the NAD-dependent ring dehydrogenation of precorrin-2 to yield sirohydrochlorin. Finally, it catalyzes the ferrochelation of sirohydrochlorin to yield siroheme. The sequence is that of Siroheme synthase 1 from Aeromonas hydrophila subsp. hydrophila (strain ATCC 7966 / DSM 30187 / BCRC 13018 / CCUG 14551 / JCM 1027 / KCTC 2358 / NCIMB 9240 / NCTC 8049).